Here is a 568-residue protein sequence, read N- to C-terminus: Putative ABC transporter ATP-binding protein EF_2153 (568 aa).

2 ABC transporter domains span residues 6-247 and 301-535; these read ITFN…GIRE and LRLE…ASLK. ATP-binding positions include 40 to 47 and 335 to 342; these read GPSGSGKS and GKNGAGKS.

The protein belongs to the ABC transporter superfamily.

Its subcellular location is the cell membrane. Its function is as follows. Probably part of an ABC transporter complex. Responsible for energy coupling to the transport system. The protein is Putative ABC transporter ATP-binding protein EF_2153 of Enterococcus faecalis (strain ATCC 700802 / V583).